Consider the following 122-residue polypeptide: Large ribosomal subunit protein uL18 (122 aa).

The segment covering 1-21 (MSKLSRKQQTQKRHRRLRRHI) has biased composition (basic residues). A disordered region spans residues 1–25 (MSKLSRKQQTQKRHRRLRRHITGTS).

It belongs to the universal ribosomal protein uL18 family. Part of the 50S ribosomal subunit; part of the 5S rRNA/L5/L18/L25 subcomplex. Contacts the 5S and 23S rRNAs.

Functionally, this is one of the proteins that bind and probably mediate the attachment of the 5S RNA into the large ribosomal subunit, where it forms part of the central protuberance. This is Large ribosomal subunit protein uL18 from Synechococcus sp. (strain CC9902).